A 124-amino-acid polypeptide reads, in one-letter code: Large ribosomal subunit protein bL17 (124 aa).

It belongs to the bacterial ribosomal protein bL17 family. As to quaternary structure, part of the 50S ribosomal subunit. Contacts protein L32.

This Borrelia turicatae (strain 91E135) protein is Large ribosomal subunit protein bL17.